A 1235-amino-acid chain; its full sequence is DNA polymerase (1235 aa).

Residues 773–887 (LLGYYISSGD…LILLLNSIGV (115 aa)) enclose the DOD-type homing endonuclease domain.

It belongs to the DNA polymerase type-B family. This protein undergoes a protein self splicing that involves a post-translational excision of the intervening region (intein) followed by peptide ligation.

It catalyses the reaction DNA(n) + a 2'-deoxyribonucleoside 5'-triphosphate = DNA(n+1) + diphosphate. The sequence is that of DNA polymerase (pol) from Pyrococcus horikoshii (strain ATCC 700860 / DSM 12428 / JCM 9974 / NBRC 100139 / OT-3).